Reading from the N-terminus, the 189-residue chain is Peptidyl-tRNA hydrolase (189 aa).

Tyr14 is a binding site for tRNA. Catalysis depends on His19, which acts as the Proton acceptor. Tyr64, Asn66, and Asn112 together coordinate tRNA.

This sequence belongs to the PTH family. In terms of assembly, monomer.

It localises to the cytoplasm. It catalyses the reaction an N-acyl-L-alpha-aminoacyl-tRNA + H2O = an N-acyl-L-amino acid + a tRNA + H(+). Hydrolyzes ribosome-free peptidyl-tRNAs (with 1 or more amino acids incorporated), which drop off the ribosome during protein synthesis, or as a result of ribosome stalling. Functionally, catalyzes the release of premature peptidyl moieties from peptidyl-tRNA molecules trapped in stalled 50S ribosomal subunits, and thus maintains levels of free tRNAs and 50S ribosomes. The sequence is that of Peptidyl-tRNA hydrolase from Finegoldia magna (strain ATCC 29328 / DSM 20472 / WAL 2508) (Peptostreptococcus magnus).